Consider the following 144-residue polypeptide: uncharacterized protein (144 aa).

This is an uncharacterized protein from Archaeoglobus fulgidus (strain ATCC 49558 / DSM 4304 / JCM 9628 / NBRC 100126 / VC-16).